The primary structure comprises 63 residues: ATPase inhibitor, mitochondrial (63 aa).

Residues 1–23 form a disordered region; sequence TAGATGATRQDGSTDAFEKREKA. The stretch at 18–62 forms a coiled coil; sequence EKREKAQEDLYIRQHEKEQLEALKESLKKQKKSLDDLEBKIDDLT.

It belongs to the ATPase inhibitor family.

Its subcellular location is the mitochondrion. In terms of biological role, this protein forms a one-to-one complex with ATPase to inhibit the enzyme activity completely. This chain is ATPase inhibitor, mitochondrial, found in Cyberlindnera jadinii (Torula yeast).